The primary structure comprises 183 residues: Transcription termination/antitermination protein NusG (183 aa).

The 31-residue stretch at 131 to 161 (PGEEVRVTEGPFADFNGTVEEVDYEKGRLKV) folds into the KOW domain.

It belongs to the NusG family.

In terms of biological role, participates in transcription elongation, termination and antitermination. The protein is Transcription termination/antitermination protein NusG of Pasteurella multocida (strain Pm70).